The sequence spans 295 residues: Sulfotransferase 1A2 (295 aa).

3'-phosphoadenylyl sulfate is bound at residue 48-53 (KSGTTW). Substrate is bound at residue 106–108 (KTH). The active-site Proton acceptor is histidine 108. 3'-phosphoadenylyl sulfate-binding positions include arginine 130, serine 138, tyrosine 193, 227-232 (TSFKEM), and 255-259 (FMRKG).

Belongs to the sulfotransferase 1 family. In terms of assembly, homodimer.

It localises to the cytoplasm. It catalyses the reaction a phenol + 3'-phosphoadenylyl sulfate = an aryl sulfate + adenosine 3',5'-bisphosphate + H(+). Functionally, sulfotransferase that utilizes 3'-phospho-5'-adenylyl sulfate (PAPS) as sulfonate donor to catalyze the sulfate conjugation of catecholamines, phenolic drugs and neurotransmitters. Is also responsible for the sulfonation and activation of minoxidil. Mediates the metabolic activation of carcinogenic N-hydroxyarylamines to DNA binding products and could so participate as modulating factor of cancer risk. This is Sulfotransferase 1A2 (SULT1A2) from Homo sapiens (Human).